A 513-amino-acid polypeptide reads, in one-letter code: ATP synthase subunit alpha (513 aa).

169–176 (GDRQTGKT) contacts ATP.

This sequence belongs to the ATPase alpha/beta chains family. As to quaternary structure, F-type ATPases have 2 components, CF(1) - the catalytic core - and CF(0) - the membrane proton channel. CF(1) has five subunits: alpha(3), beta(3), gamma(1), delta(1), epsilon(1). CF(0) has three main subunits: a(1), b(2) and c(9-12). The alpha and beta chains form an alternating ring which encloses part of the gamma chain. CF(1) is attached to CF(0) by a central stalk formed by the gamma and epsilon chains, while a peripheral stalk is formed by the delta and b chains.

It localises to the cell inner membrane. It carries out the reaction ATP + H2O + 4 H(+)(in) = ADP + phosphate + 5 H(+)(out). Produces ATP from ADP in the presence of a proton gradient across the membrane. The alpha chain is a regulatory subunit. The chain is ATP synthase subunit alpha from Shewanella amazonensis (strain ATCC BAA-1098 / SB2B).